The chain runs to 461 residues: MSLRIHNTLTRSTEAFSPIEPGHVRMYVCGMTIYDLCHVGHARMMMAFDVVQRWLRVSGLRVTYVRNITDIDDKIIKRALERGIPIRQLTDEMTAAMHQDIGALGIEPPTHEPRATEYVGAMVGLIEVLERNGLAYRVPGGDVNYSVRKFPGYGRLSGKSIDALRAGERVAVLEGKDDPLDFVLWKAAKPEEPADAKYDAPFGPGRPGWHIECSAMSHALLGERFDIHGGGMDLQFPHHENEIAQSDGAFHLGSGHSFVNVWMHNGFLNVDNEKMSKSLGNFFTIRDILKRYDGETIRFFMLRVHYRSPFNFSDAGLDDARSGLRRLYTALEGTAVAPAEIDWTDPHAARFKAAMDDDFNTPIAVSVLFDLAGEVNRSRSAQSAGLLRSLAGTLGLLQQEAAQYLQGGSGVDTGHIEAQIAARAAAKAARDFAESDRIRDALAAQGIVLKDTPAGTTWVKA.

Cys-29 serves as a coordination point for Zn(2+). The 'HIGH' region signature appears at Met-31–His-41. Zn(2+) contacts are provided by Cys-213, His-238, and Glu-242. A 'KMSKS' region motif is present at residues Lys-274–Ser-278. Position 277 (Lys-277) interacts with ATP.

Belongs to the class-I aminoacyl-tRNA synthetase family. Monomer. Zn(2+) is required as a cofactor.

It is found in the cytoplasm. The enzyme catalyses tRNA(Cys) + L-cysteine + ATP = L-cysteinyl-tRNA(Cys) + AMP + diphosphate. The sequence is that of Cysteine--tRNA ligase from Methylibium petroleiphilum (strain ATCC BAA-1232 / LMG 22953 / PM1).